We begin with the raw amino-acid sequence, 218 residues long: ATP-dependent dethiobiotin synthetase BioD (218 aa).

ATP is bound at residue 9–15; it reads TNAGKTT. Thr14 lines the Mg(2+) pocket. The active site involves Lys35. Lys35 is a binding site for phosphate. Thr39 provides a ligand contact to substrate. ATP is bound by residues Asp50, Glu116, and 116-119; that span reads EGAG. Mg(2+)-binding residues include Asp50 and Glu116. 116-119 contributes to the phosphate binding site; sequence EGAG. 151–154 contributes to the substrate binding site; sequence GLIN. ATP is bound by residues Asn175 and 175 to 177; that span reads NLK.

This sequence belongs to the dethiobiotin synthetase family. Homodimer. Requires Mg(2+) as cofactor.

It localises to the cytoplasm. It carries out the reaction (7R,8S)-7,8-diammoniononanoate + CO2 + ATP = (4R,5S)-dethiobiotin + ADP + phosphate + 3 H(+). Its pathway is cofactor biosynthesis; biotin biosynthesis; biotin from 7,8-diaminononanoate: step 1/2. In terms of biological role, catalyzes a mechanistically unusual reaction, the ATP-dependent insertion of CO2 between the N7 and N8 nitrogen atoms of 7,8-diaminopelargonic acid (DAPA, also called 7,8-diammoniononanoate) to form a ureido ring. The polypeptide is ATP-dependent dethiobiotin synthetase BioD (Helicobacter pylori (strain ATCC 700392 / 26695) (Campylobacter pylori)).